The sequence spans 427 residues: Bifunctional enzyme MtnB/MtnX (427 aa).

The interval 1-221 (MRKPLIICDF…LEETAEVKEW (221 aa)) is HK-MTPenyl-1-P phosphatase. Positions 222–427 (MSEQKRQELA…KLKALQAYHV (206 aa)) are MTRu-1-P dehydratase. 2 residues coordinate Zn(2+): H317 and H319.

This sequence in the N-terminal section; belongs to the HAD-like hydrolase superfamily. MtnX family. The protein in the C-terminal section; belongs to the aldolase class II family. MtnB subfamily. In terms of assembly, homotetramer. Requires Zn(2+) as cofactor.

The catalysed reaction is 5-(methylsulfanyl)-D-ribulose 1-phosphate = 5-methylsulfanyl-2,3-dioxopentyl phosphate + H2O. It carries out the reaction 2-hydroxy-5-methylsulfanyl-3-oxopent-1-enyl phosphate + H2O = 1,2-dihydroxy-5-(methylsulfanyl)pent-1-en-3-one + phosphate. Its pathway is amino-acid biosynthesis; L-methionine biosynthesis via salvage pathway; L-methionine from S-methyl-5-thio-alpha-D-ribose 1-phosphate: step 2/6. The protein operates within amino-acid biosynthesis; L-methionine biosynthesis via salvage pathway; L-methionine from S-methyl-5-thio-alpha-D-ribose 1-phosphate: step 4/6. Functionally, catalyzes the dehydration of methylthioribulose-1-phosphate (MTRu-1-P) into 2,3-diketo-5-methylthiopentyl-1-phosphate (DK-MTP-1-P). In terms of biological role, dephosphorylates 2-hydroxy-3-keto-5-methylthiopentenyl-1-phosphate (HK-MTPenyl-1-P) yielding 1,2-dihydroxy-3-keto-5-methylthiopentene (DHK-MTPene). The chain is Bifunctional enzyme MtnB/MtnX (mtnB/mtnX) from Bacillus licheniformis (strain ATCC 14580 / DSM 13 / JCM 2505 / CCUG 7422 / NBRC 12200 / NCIMB 9375 / NCTC 10341 / NRRL NRS-1264 / Gibson 46).